A 1072-amino-acid chain; its full sequence is Carbamoyl phosphate synthase large chain (1072 aa).

Residues 1–401 (MPKRLDINTI…SLLKAVRSLE (401 aa)) are carboxyphosphate synthetic domain. Arginine 129, arginine 169, glycine 175, glycine 176, lysine 208, isoleucine 210, glutamate 215, glycine 241, valine 242, histidine 243, glutamine 284, and glutamate 298 together coordinate ATP. The ATP-grasp 1 domain occupies 133–327 (RTLMQDLNEP…IAKLAAKIAV (195 aa)). The Mg(2+) site is built by glutamine 284, glutamate 298, and asparagine 300. Positions 284, 298, and 300 each coordinate Mn(2+). The oligomerization domain stretch occupies residues 402–546 (LGIYHLELDH…YSTYADENES (145 aa)). Residues 547 to 929 (IVTDRKSVVV…ALYKGLVASG (383 aa)) are carbamoyl phosphate synthetic domain. The ATP-grasp 2 domain occupies 671–861 (EAALTKLGIP…MANVATKVIL (191 aa)). Residues arginine 707, arginine 746, glutamate 752, glycine 777, valine 778, histidine 779, serine 780, glutamine 820, and glutamate 832 each coordinate ATP. Residues glutamine 820, glutamate 832, and asparagine 834 each coordinate Mg(2+). The Mn(2+) site is built by glutamine 820, glutamate 832, and asparagine 834. The MGS-like domain occupies 930–1072 (INIPTHGSVI…QTKRHEVVHA (143 aa)). The interval 930-1072 (INIPTHGSVI…QTKRHEVVHA (143 aa)) is allosteric domain.

It belongs to the CarB family. In terms of assembly, composed of two chains; the small (or glutamine) chain promotes the hydrolysis of glutamine to ammonia, which is used by the large (or ammonia) chain to synthesize carbamoyl phosphate. Tetramer of heterodimers (alpha,beta)4. The cofactor is Mg(2+). Mn(2+) is required as a cofactor.

The catalysed reaction is hydrogencarbonate + L-glutamine + 2 ATP + H2O = carbamoyl phosphate + L-glutamate + 2 ADP + phosphate + 2 H(+). It carries out the reaction hydrogencarbonate + NH4(+) + 2 ATP = carbamoyl phosphate + 2 ADP + phosphate + 2 H(+). It participates in amino-acid biosynthesis; L-arginine biosynthesis; carbamoyl phosphate from bicarbonate: step 1/1. Its pathway is pyrimidine metabolism; UMP biosynthesis via de novo pathway; (S)-dihydroorotate from bicarbonate: step 1/3. Its function is as follows. Large subunit of the glutamine-dependent carbamoyl phosphate synthetase (CPSase). CPSase catalyzes the formation of carbamoyl phosphate from the ammonia moiety of glutamine, carbonate, and phosphate donated by ATP, constituting the first step of 2 biosynthetic pathways, one leading to arginine and/or urea and the other to pyrimidine nucleotides. The large subunit (synthetase) binds the substrates ammonia (free or transferred from glutamine from the small subunit), hydrogencarbonate and ATP and carries out an ATP-coupled ligase reaction, activating hydrogencarbonate by forming carboxy phosphate which reacts with ammonia to form carbamoyl phosphate. In Bacillus cereus (strain ATCC 14579 / DSM 31 / CCUG 7414 / JCM 2152 / NBRC 15305 / NCIMB 9373 / NCTC 2599 / NRRL B-3711), this protein is Carbamoyl phosphate synthase large chain.